The sequence spans 290 residues: Glycine--tRNA ligase alpha subunit (290 aa).

It belongs to the class-II aminoacyl-tRNA synthetase family. As to quaternary structure, tetramer of two alpha and two beta subunits.

The protein localises to the cytoplasm. It catalyses the reaction tRNA(Gly) + glycine + ATP = glycyl-tRNA(Gly) + AMP + diphosphate. The protein is Glycine--tRNA ligase alpha subunit of Gloeobacter violaceus (strain ATCC 29082 / PCC 7421).